We begin with the raw amino-acid sequence, 624 residues long: Adenine deaminase 1 (624 aa).

It belongs to the metallo-dependent hydrolases superfamily. Adenine deaminase family. The cofactor is Mn(2+).

The catalysed reaction is adenine + H2O + H(+) = hypoxanthine + NH4(+). In Bradyrhizobium sp. (strain ORS 278), this protein is Adenine deaminase 1.